Reading from the N-terminus, the 522-residue chain is MSRLFRGATIVWVVLRYGLDELVLTSFQKPWLRLLARIVSFGRKLDAPRGQRLREALERLGPIFVKFGQVLSTRRDLLPPDIANELALLQDRVPPFDPDVAVATIERAFRRPVGEVFVSFERVPVASASIAQVHFAIVRDRHGVEREVAVKVLRPGMLPVIDNDLGLMRAMAGWVESLSADGKRLKPRQVVAEFDNYLHDELDLIREAANAAQLRRNMERLGLVRIPEILWDFCHPEVLVMERMKGVPISQIERLRAAGVDIRQLARDGVTIFFTQVFRDGFFHADMHPGNIQVSLEPGSFGRYISLDFGIVGSLTEFDKEYLAQNFTAFFRRDYKRVAELHVESGWVPADTRINELESAIRAVCEPYFDRPLKEISLGMVLMRLFQTSRRFHVEIQPQLVLLQKTLLNIEGLGRQLDPELDLWSTAKPFLEKWMLDQMGPQRLWREVKAESPHFAKMLPELPRLLHDYLHHKPHDHRREMQELLAEQRRTNRLLQSIIYGGMGFVLGLLALQFLIRIRFFH.

Residues 119-497 (SFERVPVASA…QRRTNRLLQS (379 aa)) enclose the Protein kinase domain. Residues 125 to 133 (VASASIAQV) and K151 each bind ATP. Catalysis depends on D286, which acts as the Proton acceptor. The helical transmembrane segment at 496-516 (QSIIYGGMGFVLGLLALQFLI) threads the bilayer.

This sequence belongs to the ABC1 family. UbiB subfamily.

The protein localises to the cell inner membrane. It functions in the pathway cofactor biosynthesis; ubiquinone biosynthesis [regulation]. Functionally, is probably a protein kinase regulator of UbiI activity which is involved in aerobic coenzyme Q (ubiquinone) biosynthesis. The chain is Probable protein kinase UbiB from Paracidovorax citrulli (strain AAC00-1) (Acidovorax citrulli).